Consider the following 79-residue polypeptide: Exodeoxyribonuclease 7 small subunit (79 aa).

It belongs to the XseB family. In terms of assembly, heterooligomer composed of large and small subunits.

The protein resides in the cytoplasm. The enzyme catalyses Exonucleolytic cleavage in either 5'- to 3'- or 3'- to 5'-direction to yield nucleoside 5'-phosphates.. Its function is as follows. Bidirectionally degrades single-stranded DNA into large acid-insoluble oligonucleotides, which are then degraded further into small acid-soluble oligonucleotides. The sequence is that of Exodeoxyribonuclease 7 small subunit from Haemophilus influenzae (strain PittGG).